A 390-amino-acid polypeptide reads, in one-letter code: 3-ketoacyl-CoA thiolase (390 aa).

The active-site Acyl-thioester intermediate is the cysteine 95. Catalysis depends on proton acceptor residues histidine 346 and cysteine 376.

It belongs to the thiolase-like superfamily. Thiolase family. As to quaternary structure, heterotetramer of two alpha chains (FadB) and two beta chains (FadA).

The protein localises to the cytoplasm. It catalyses the reaction an acyl-CoA + acetyl-CoA = a 3-oxoacyl-CoA + CoA. Its pathway is lipid metabolism; fatty acid beta-oxidation. In terms of biological role, catalyzes the final step of fatty acid oxidation in which acetyl-CoA is released and the CoA ester of a fatty acid two carbons shorter is formed. The protein is 3-ketoacyl-CoA thiolase of Acinetobacter baylyi (strain ATCC 33305 / BD413 / ADP1).